A 381-amino-acid polypeptide reads, in one-letter code: Neutral protease 2 homolog mep20 (381 aa).

The first 19 residues, 1 to 19, serve as a signal peptide directing secretion; the sequence is MRFTALASAILPLACNVLA. The propeptide occupies 20 to 193; the sequence is LPAKTGEAPK…ASAVKPLDKR (174 aa). 2 cysteine pairs are disulfide-bonded: C199–C271 and C278–C296. H321 is a Zn(2+) binding site. Residue E322 is part of the active site. 2 residues coordinate Zn(2+): H325 and D336.

This sequence belongs to the peptidase M35 family. Zn(2+) serves as cofactor.

It catalyses the reaction Preferential cleavage of bonds with hydrophobic residues in P1'. Also 3-Asn-|-Gln-4 and 8-Gly-|-Ser-9 bonds in insulin B chain.. Its function is as follows. Secreted metalloproteinase that allows assimilation of proteinaceous substrates. Shows high activities on basic nuclear substrates such as histone and protamine. In Aspergillus flavus, this protein is Neutral protease 2 homolog mep20 (mep20).